The chain runs to 1208 residues: Putative protease AXL1 (1208 aa).

His68 contacts Zn(2+). Glu71 serves as the catalytic Proton acceptor. Residues His72 and Glu156 each coordinate Zn(2+). Ser262 is subject to Phosphoserine.

It belongs to the peptidase M16 family. As to quaternary structure, interacts with BUD5. Zn(2+) is required as a cofactor.

It localises to the bud neck. Its function is as follows. Probable protease. Involved in axial budding. The sequence is that of Putative protease AXL1 (AXL1) from Saccharomyces cerevisiae (strain ATCC 204508 / S288c) (Baker's yeast).